A 913-amino-acid polypeptide reads, in one-letter code: Vacuolar membrane protease (913 aa).

The Cytoplasmic portion of the chain corresponds to 1-15 (MMANYFRSTFKFRKT). A helical transmembrane segment spans residues 16-36 (TVSTLFVLTVLVISILTWFDA). The Vacuolar segment spans residues 37–364 (NKYKSNLPDD…FFVVSARQLY (328 aa)). N-linked (GlcNAc...) asparagine glycosylation occurs at Asn117. The Zn(2+) site is built by His152 and Asp164. Glu196 serves as the catalytic Proton acceptor. Positions 197, 222, and 296 each coordinate Zn(2+). A helical membrane pass occupies residues 365-385 (VWNIVLLCVLPITLILLRIVC). Residues 386–394 (NKLGTWRMP) are Cytoplasmic-facing. The chain crosses the membrane as a helical span at residues 395-415 (TSALFTRIPFALFVSSFTIYF). Over 416–431 (TKELLLQLNPTIWSRN) the chain is Vacuolar. The helical transmembrane segment at 432–452 (FILPFLFCISEFLLINTLVLA) threads the bilayer. Residues 453 to 465 (LFEYLWPIQDFKT) lie on the Cytoplasmic side of the membrane. The helical transmembrane segment at 466–486 (LSLLELSAIAWLFLLKCTWDL) threads the bilayer. Residues 487–494 (SSSGFKAT) are Vacuolar-facing. The chain crosses the membrane as a helical span at residues 495–515 (GVYPVTVFYLFISLASMFGLC). Over 516-600 (SMCFGKRPNA…TLNYDWSAQY (85 aa)) the chain is Cytoplasmic. The segment covering 540-552 (NDTHSIECPRQPE) has biased composition (basic and acidic residues). A disordered region spans residues 540–578 (NDTHSIECPRQPEDSETTETSPLINTPSSSVQSSPIASS). A compositionally biased stretch (polar residues) spans 557–566 (TETSPLINTP). Residues 567-578 (SSSVQSSPIASS) show a composition bias toward low complexity. A helical transmembrane segment spans residues 601 to 621 (LLAVPINAFLIWESLFNLFDA). Over 622 to 634 (LSMTVQESNKATE) the chain is Vacuolar. A helical transmembrane segment spans residues 635–655 (AVFKFAIYGAIFLCSPLLPFT). Residues 656-660 (TKLNR) lie on the Cytoplasmic side of the membrane. The chain crosses the membrane as a helical span at residues 661-681 (FVVIILGVVTILAASFSLFAA). Residues 682–913 (PYTELAPLKL…MVTIHKYLEL (232 aa)) lie on the Vacuolar side of the membrane. N-linked (GlcNAc...) asparagine glycosylation is found at Asn729, Asn794, and Asn810.

It belongs to the peptidase M28 family. It depends on Zn(2+) as a cofactor.

It localises to the vacuole membrane. Its function is as follows. May be involved in vacuolar sorting and osmoregulation. The protein is Vacuolar membrane protease of Kluyveromyces lactis (strain ATCC 8585 / CBS 2359 / DSM 70799 / NBRC 1267 / NRRL Y-1140 / WM37) (Yeast).